A 447-amino-acid chain; its full sequence is UDP-glucosyl transferase 79T1 (447 aa).

The Proton acceptor role is filled by H18. D116 functions as the Charge relay in the catalytic mechanism. Positions 265, 323, 324, 341, 346, and 349 each coordinate UDP.

This sequence belongs to the UDP-glycosyltransferase family. As to expression, mainly expressed in flowers, flower buds and young leaves, and, to a lesser extent, in old leaves, stems and roots.

It participates in secondary metabolite biosynthesis; terpenoid biosynthesis. Its function is as follows. Component of the oleanane-type triterpene saponins (e.g. saponarioside A and saponarioside B) biosynthetic pathway, leading to the production of natural products with detergent properties used as traditional sources of soap. A glycosyltransferase that mediates the conversion of QA-triF to QA-triFR via the elongation of the C-28 sugar chain with a deoxyhexose on the D-fucose moiety. The protein is UDP-glucosyl transferase 79T1 of Saponaria officinalis (Common soapwort).